The sequence spans 380 residues: MLTKIAVEKILERALMGYDLSPQEGVVLLQQTEPEAIAAIRATSDTLRHTQAGDMVTYIINRNINFTNICEQHCSFCAFRRDDGDVGAYWLDSAQILEKATDAVRRGATEICMQGGLNPQAQINGKSLPYYLKVVETIKQEFPQIHLHAFSPQEVEFIARLDGLEYADVIIALRDAGVGSMPGTAAEVLDDEVRRILCPEKINTATWLGIVSTAHKLGLHTTSTMLSGHIETHEQQIGHLEKLRSLQQTAINQGYPAKITEFILLPFVGQEAPKPLRRRVGRDQPILSDALLLGAVARIYLGNWIPNHQQSWVKLGLAGATEALVWGCNDIGGTLMEEHITTMAGALGGTCMEVETLKTAIASLGRPYQQRNTLYQKVNS.

Residues 56–303 (VTYIINRNIN…GAVARIYLGN (248 aa)) enclose the Radical SAM core domain. [4Fe-4S] cluster-binding residues include C70, C74, and C77.

The protein belongs to the radical SAM superfamily. CofH family. In terms of assembly, consists of two subunits, CofG and CofH. [4Fe-4S] cluster is required as a cofactor.

The enzyme catalyses 5-amino-6-(D-ribitylamino)uracil + L-tyrosine + S-adenosyl-L-methionine = 5-amino-5-(4-hydroxybenzyl)-6-(D-ribitylimino)-5,6-dihydrouracil + 2-iminoacetate + 5'-deoxyadenosine + L-methionine + H(+). It functions in the pathway cofactor biosynthesis; coenzyme F0 biosynthesis. Functionally, catalyzes the radical-mediated synthesis of 5-amino-5-(4-hydroxybenzyl)-6-(D-ribitylimino)-5,6-dihydrouracil from 5-amino-6-(D-ribitylamino)uracil and L-tyrosine. In Nostoc punctiforme (strain ATCC 29133 / PCC 73102), this protein is 5-amino-6-(D-ribitylamino)uracil--L-tyrosine 4-hydroxyphenyl transferase.